Consider the following 1083-residue polypeptide: RecBCD enzyme subunit RecB (1083 aa).

The UvrD-like helicase ATP-binding domain maps to 1–323 (MKVFDLLGPL…QTLGTNWRSD (323 aa)). Residues 1-704 (MKVFDLLGPL…RGRAPGEAIV (704 aa)) form a DNA-binding and helicase activity, interacts with RecC region. An ATP-binding site is contributed by 21-28 (ASAGTGKT). A UvrD-like helicase C-terminal domain is found at 349-607 (VQARHQGHRL…QIMTVWVSKG (259 aa)). The tract at residues 765–1083 (AWKRTSYSGL…LSKLLDAEAP (319 aa)) is nuclease activity, interacts with RecD and RecA. 3 residues coordinate Mg(2+): His-830, Asp-962, and Asp-975. The active-site For nuclease activity is the Asp-975.

It belongs to the helicase family. UvrD subfamily. In terms of assembly, heterotrimer of RecB, RecC and RecD. All subunits contribute to DNA-binding. Interacts with RecA. Requires Mg(2+) as cofactor.

It carries out the reaction Exonucleolytic cleavage (in the presence of ATP) in either 5'- to 3'- or 3'- to 5'-direction to yield 5'-phosphooligonucleotides.. The catalysed reaction is Couples ATP hydrolysis with the unwinding of duplex DNA by translocating in the 3'-5' direction.. It catalyses the reaction ATP + H2O = ADP + phosphate + H(+). Its function is as follows. A helicase/nuclease that prepares dsDNA breaks (DSB) for recombinational DNA repair. Binds to DSBs and unwinds DNA via a highly rapid and processive ATP-dependent bidirectional helicase activity. Holoenzyme degrades any linearized DNA that is unable to undergo homologous recombination. In the holoenzyme this subunit contributes DNA-dependent ATPase activity, exonuclease activity and 3'-5' helicase activity. Unlike the case in E.coli, suppresses RecA-dependent homologous recombination, is instead required for single-strand annealing pathway repair of DSB. This Mycolicibacterium smegmatis (strain ATCC 700084 / mc(2)155) (Mycobacterium smegmatis) protein is RecBCD enzyme subunit RecB.